The primary structure comprises 151 residues: Ubiquitin-conjugating enzyme E2 2 (151 aa).

The 147-residue stretch at 4-150 (AARRRLMRDF…VRETVERSWE (147 aa)) folds into the UBC core domain. Cys-88 functions as the Glycyl thioester intermediate in the catalytic mechanism.

This sequence belongs to the ubiquitin-conjugating enzyme family.

It is found in the cytoplasm. Its subcellular location is the nucleus. The enzyme catalyses S-ubiquitinyl-[E1 ubiquitin-activating enzyme]-L-cysteine + [E2 ubiquitin-conjugating enzyme]-L-cysteine = [E1 ubiquitin-activating enzyme]-L-cysteine + S-ubiquitinyl-[E2 ubiquitin-conjugating enzyme]-L-cysteine.. Its pathway is protein modification; protein ubiquitination. Catalyzes the covalent attachment of ubiquitin to other proteins. Plays a role in transcription regulation by catalyzing the monoubiquitination of histone H2B to form H2BK123ub1. H2BK123ub1 gives a specific tag for epigenetic transcriptional activation and is also a prerequisite for H3K4me and H3K79me formation. Also involved in postreplication repair of UV-damaged DNA, in N-end rule-dependent protein degradation and in sporulation. The chain is Ubiquitin-conjugating enzyme E2 2 (UBC2) from Trichoderma harzianum (Hypocrea lixii).